Here is a 234-residue protein sequence, read N- to C-terminus: Orotate phosphoribosyltransferase (234 aa).

Lys-30 lines the 5-phospho-alpha-D-ribose 1-diphosphate pocket. Residue 38-39 (FF) participates in orotate binding. Residues 80 to 81 (YK), Arg-110, Lys-111, Lys-114, His-116, and 136 to 144 (DDVITAGTA) contribute to the 5-phospho-alpha-D-ribose 1-diphosphate site. Residues Thr-140 and Arg-168 each coordinate orotate.

The protein belongs to the purine/pyrimidine phosphoribosyltransferase family. PyrE subfamily. As to quaternary structure, homodimer.

The enzyme catalyses orotidine 5'-phosphate + diphosphate = orotate + 5-phospho-alpha-D-ribose 1-diphosphate. The protein operates within pyrimidine metabolism; UMP biosynthesis via de novo pathway; UMP from orotate: step 1/2. In terms of biological role, catalyzes the transfer of a ribosyl phosphate group from 5-phosphoribose 1-diphosphate to orotate, leading to the formation of orotidine monophosphate (OMP). This is Orotate phosphoribosyltransferase (URA5) from Metarhizium anisopliae (Entomophthora anisopliae).